Consider the following 1586-residue polypeptide: Zinc finger protein GLI2 (1586 aa).

Over residues 1–10 (METSASATAS) the composition is skewed to polar residues. The segment at 1 to 22 (METSASATASEKQEAKSGILEA) is disordered. Residue Val50 forms a Glycyl lysine isopeptide (Lys-Gly) (interchain with G-Cter in SUMO2) linkage. Phosphoserine is present on residues Ser149, Ser234, Ser236, and Ser242. Residues 342–367 (SSSSNCLSDTNQNKQSSESAVSSTVN) are compositionally biased toward polar residues. The tract at residues 342-389 (SSSSNCLSDTNQNKQSSESAVSSTVNPVAIHKRSKVKTEPEGLRPASP) is disordered. Ser388 bears the Phosphoserine; by DYRK2 mark. The segment at 437-464 (TNCHWEDCTKEYDTQEQLVHHINNEHIH) adopts a C2H2-type 1 zinc-finger fold. The C2H2-type 2; degenerate zinc-finger motif lies at 475 to 497 (QACTREQKPFKAQYMLVVHMRRH). 3 consecutive C2H2-type zinc fingers follow at residues 503 to 527 (HKCT…LRSH), 533 to 558 (YVCE…NRTH), and 564 to 589 (YICK…KTVH). Disordered stretches follow at residues 577-636 (DPSS…TSQA) and 650-716 (SSGL…SAGG). The segment covering 589-605 (HGPDAHVTKKQRNDVHL) has biased composition (basic and acidic residues). Low complexity predominate over residues 654–674 (CQSSPGAQSSCSSEPSPLGSA). Thr725 carries the phosphothreonine modification. Disordered stretches follow at residues 742 to 879 (DSCS…SGLL), 925 to 1030 (RTLP…RPPS), 1182 to 1215 (QYPG…PSQG), 1421 to 1441 (MGNM…GAPD), and 1469 to 1498 (MRSQ…QVSS). Lys757 is subject to N6-acetyllysine; by EP300. A compositionally biased stretch (polar residues) spans 791-802 (LSASEVTMLSQL). 2 stretches are compositionally biased toward low complexity: residues 809–824 (STST…RRSS) and 947–961 (GHGH…PHEA). The span at 968–977 (RASDPVRRPD) shows a compositional bias: basic and acidic residues. Ser1011 is subject to Phosphoserine; by DYRK2. A compositionally biased stretch (polar residues) spans 1469 to 1485 (MRSQPPQPQACQDSIQP).

Belongs to the GLI C2H2-type zinc-finger protein family. Interaction with ZIC1 and ZIC2. Interacts with STK36. Interacts with SUFU; this inhibits transcriptional activation mediated by GLI2. Interacts (via C-terminal internal region) with FOXC1 (via N-terminus); this interaction is direct and increases GLI2 DNA-binding and transcriptional activity through a smoothened (SMO)-independent Hedgehog (Hh) signaling pathway. In terms of processing, phosphorylated in vitro by ULK3. Phosphorylated by DYRK2; this inhibits GLI2 transcription factor activity and promotes proteasomal degradation of GLI2. Post-translationally, acetylation at Lys-757 inhibits Hh target gene expression, probably by impeding entry into chromatin thus preventing promoter occupancy. In terms of tissue distribution, expressed in breast cancers (at protein level). Isoform 1 and isoform 4 are expressed in HTLV-1-infected T-cell lines (at protein level). Isoform 1 and isoform 2 are strongly expressed in HTLV-1-infected T-cell lines. Isoform 3 and isoform 4 are weakly expressed in HTLV-1-infected T-cell lines.

The protein resides in the nucleus. Its subcellular location is the cytoplasm. It localises to the cell projection. The protein localises to the cilium. Functions as a transcription regulator in the hedgehog (Hh) pathway. Functions as a transcriptional activator. May also function as transcriptional repressor. Requires STK36 for full transcriptional activator activity. Required for normal embryonic development. Functionally, involved in the smoothened (SHH) signaling pathway. In terms of biological role, acts as a transcriptional activator in T-cell leukemia virus type 1 (HTLV-1)-infected cells in a Tax-dependent manner. Binds to the DNA sequence 5'-GAACCACCCA-3' which is part of the Tax-responsive element (TRE-2S) regulatory element that augments the Tax-dependent enhancer of HTLV-1. Its function is as follows. (Microbial infection) Acts as a transcriptional activators in T-cell leukemia virus type 1 (HTLV-1)-infected cells in a Tax-dependent manner. Binds to the DNA sequence 5'-GAACCACCCA-3' which is part of the Tax-responsive element (TRE-2S) regulatory element that augments the Tax-dependent enhancer of HTLV-1. Acts as a transcriptional repressor. The polypeptide is Zinc finger protein GLI2 (Homo sapiens (Human)).